We begin with the raw amino-acid sequence, 1229 residues long: DNA-directed RNA polymerase subunit beta (1229 aa).

It belongs to the RNA polymerase beta chain family. The RNAP catalytic core consists of 2 alpha, 1 beta, 1 beta' and 1 omega subunit. When a sigma factor is associated with the core the holoenzyme is formed, which can initiate transcription.

The enzyme catalyses RNA(n) + a ribonucleoside 5'-triphosphate = RNA(n+1) + diphosphate. Functionally, DNA-dependent RNA polymerase catalyzes the transcription of DNA into RNA using the four ribonucleoside triphosphates as substrates. This chain is DNA-directed RNA polymerase subunit beta, found in Roseiflexus sp. (strain RS-1).